Here is a 71-residue protein sequence, read N- to C-terminus: Small ribosomal subunit protein bS21 (71 aa).

The protein belongs to the bacterial ribosomal protein bS21 family.

The protein is Small ribosomal subunit protein bS21 of Chromohalobacter salexigens (strain ATCC BAA-138 / DSM 3043 / CIP 106854 / NCIMB 13768 / 1H11).